Here is a 332-residue protein sequence, read N- to C-terminus: Methionine import ATP-binding protein MetN (332 aa).

In terms of domain architecture, ABC transporter spans 2–239 (ITFQDVSKTY…PASDTARRFV (238 aa)). 36–43 (GASGAGKS) contributes to the ATP binding site.

It belongs to the ABC transporter superfamily. Methionine importer (TC 3.A.1.24) family. In terms of assembly, the complex is composed of two ATP-binding proteins (MetN), two transmembrane proteins (MetI) and a solute-binding protein (MetQ).

It is found in the cell inner membrane. It catalyses the reaction L-methionine(out) + ATP + H2O = L-methionine(in) + ADP + phosphate + H(+). The enzyme catalyses D-methionine(out) + ATP + H2O = D-methionine(in) + ADP + phosphate + H(+). Functionally, part of the ABC transporter complex MetNIQ involved in methionine import. Responsible for energy coupling to the transport system. This chain is Methionine import ATP-binding protein MetN, found in Caulobacter vibrioides (strain ATCC 19089 / CIP 103742 / CB 15) (Caulobacter crescentus).